Here is a 196-residue protein sequence, read N- to C-terminus: Translation machinery-associated protein 22 (196 aa).

The 72-residue stretch at 97–168 (VIVKREARTK…EVVAYIHSLL (72 aa)) folds into the SUI1 domain.

Belongs to the DENR family. As to quaternary structure, interacts with the 40S ribosomal subunit.

The protein localises to the cytoplasm. The chain is Translation machinery-associated protein 22 (TMA22) from Candida glabrata (strain ATCC 2001 / BCRC 20586 / JCM 3761 / NBRC 0622 / NRRL Y-65 / CBS 138) (Yeast).